Reading from the N-terminus, the 1106-residue chain is MPRREDIRSVLILGSGPIVIGQACEFDYSGTQAAKALKEKGIRVILLNSNPATIMTDPDLADATYVEPMTVPVVQKILEKEKPDAILPTVGGQTALNLALACNSAGILEKYNVELIGAKVDAIKKAEDRELFKKAMEKIGVRVPASGLANNLKDAVEIKNKLGLPLIVRPAFTLGGTGGGIAYTEETFEEVVSKGLKASPISQVLLEESVLGWKEFELEVMRDLADNVVIICSIENIDPMGVHTGDSITVAPQQTLSDKEYQNLRDMSIAIIREIGVETGGSNIQFAVNPTNGDVIVIEMNPRVSRSSALASKATGFPIAKIAALLSIGYTLDEIKNDITRVTPASFEPSIDYVVTKVPRFAFEKFPGTDDTLGVQMKAVGEAMAIGRTFKESFQKALRSLEIDRYGFGSDGYFQELLYSRSLNNDQRKEWIDSHLKRPNDKRIFYVKLAFDEGYTVDQIHDLCKIDRWFLWQMEGLLKLEKEYSEKGNSILYKMKQVGFSNRQLSFLKNKKQILDLLDGNLRVDLKKTEIQNLLKLSEEEIEVELGSKKILPVYKRIDTCAGEFEAYTPYFYSSYDEEDESDVTNAKSVMILGGGPNRIGQGIEFDYCCCQASYALQDLGIESIMINSNPETVSTDYDTSDRLYFEPLTLEDVYRIYQNEKPEGVIIQFGGQTPLKLAKDLEKKGVKILGTSPDSIDRAEDRKRFVEVLEKLKLNSPESGIATSMEEAREIAHKIGYPVLVRPSYVLGGRAMLIINEEKELDRYMEKAEEISKDRPLLIDSFLEDAIEVDVDALCDGKEVFVTGIMEHIEEAGIHSGDSACVLPPQTLSKNMMDEIRKATVNLALELQVKGLINIQYAVKNEILYIIEVNPRASRTVPFVSKALGHPIVKYATRIMMGESLKSLPLPKEMEFSQVSVKEVVLPFNKFPGVDTILGPEMRSTGEVMGIASTAGEAFLKSQYMAGDELPSQGTVFVSINDKTKAELLSYIKDLSELGFNLIATSGTHKFLSDNGILSSKINKVYDGIFPTALDYIRENKIHLIINTPLSRVTRDDSFTIRQAAIRFKVPCLTTSNAAKALIKGMVEMKNKGFTIHSLQEIHAMPKIL.

Positions 1–402 (MPRREDIRSV…SFQKALRSLE (402 aa)) are carboxyphosphate synthetic domain. Residues Arg129, Arg169, Gly175, Gly176, Glu208, Val210, Glu215, Gly241, Val242, His243, Gln285, and Glu299 each coordinate ATP. In terms of domain architecture, ATP-grasp 1 spans 133 to 328 (KKAMEKIGVR…IAKIAALLSI (196 aa)). Gln285, Glu299, and Asn301 together coordinate Mg(2+). The Mn(2+) site is built by Gln285, Glu299, and Asn301. Residues 403–582 (IDRYGFGSDG…YSSYDEEDES (180 aa)) are oligomerization domain. The interval 583 to 964 (DVTNAKSVMI…AFLKSQYMAG (382 aa)) is carbamoyl phosphate synthetic domain. One can recognise an ATP-grasp 2 domain in the interval 707-898 (VEVLEKLKLN…IVKYATRIMM (192 aa)). The ATP site is built by Arg743, Ser782, Leu784, Glu789, Gly814, Ile815, His816, Ser817, Gln857, and Glu869. The Mg(2+) site is built by Gln857, Glu869, and Asn871. The Mn(2+) site is built by Gln857, Glu869, and Asn871. Positions 965–1106 (DELPSQGTVF…QEIHAMPKIL (142 aa)) constitute an MGS-like domain. The allosteric domain stretch occupies residues 965–1106 (DELPSQGTVF…QEIHAMPKIL (142 aa)).

Belongs to the CarB family. Composed of two chains; the small (or glutamine) chain promotes the hydrolysis of glutamine to ammonia, which is used by the large (or ammonia) chain to synthesize carbamoyl phosphate. Tetramer of heterodimers (alpha,beta)4. Mg(2+) is required as a cofactor. Requires Mn(2+) as cofactor.

The catalysed reaction is hydrogencarbonate + L-glutamine + 2 ATP + H2O = carbamoyl phosphate + L-glutamate + 2 ADP + phosphate + 2 H(+). It carries out the reaction hydrogencarbonate + NH4(+) + 2 ATP = carbamoyl phosphate + 2 ADP + phosphate + 2 H(+). It participates in amino-acid biosynthesis; L-arginine biosynthesis; carbamoyl phosphate from bicarbonate: step 1/1. The protein operates within pyrimidine metabolism; UMP biosynthesis via de novo pathway; (S)-dihydroorotate from bicarbonate: step 1/3. Functionally, large subunit of the glutamine-dependent carbamoyl phosphate synthetase (CPSase). CPSase catalyzes the formation of carbamoyl phosphate from the ammonia moiety of glutamine, carbonate, and phosphate donated by ATP, constituting the first step of 2 biosynthetic pathways, one leading to arginine and/or urea and the other to pyrimidine nucleotides. The large subunit (synthetase) binds the substrates ammonia (free or transferred from glutamine from the small subunit), hydrogencarbonate and ATP and carries out an ATP-coupled ligase reaction, activating hydrogencarbonate by forming carboxy phosphate which reacts with ammonia to form carbamoyl phosphate. The protein is Carbamoyl phosphate synthase large chain of Leptospira interrogans serogroup Icterohaemorrhagiae serovar copenhageni (strain Fiocruz L1-130).